We begin with the raw amino-acid sequence, 1400 residues long: DNA-directed RNA polymerase subunit beta (1400 aa).

It belongs to the RNA polymerase beta chain family. In terms of assembly, the RNAP catalytic core consists of 2 alpha, 1 beta, 1 beta' and 1 omega subunit. When a sigma factor is associated with the core the holoenzyme is formed, which can initiate transcription.

The enzyme catalyses RNA(n) + a ribonucleoside 5'-triphosphate = RNA(n+1) + diphosphate. Its function is as follows. DNA-dependent RNA polymerase catalyzes the transcription of DNA into RNA using the four ribonucleoside triphosphates as substrates. This Acidiphilium cryptum (strain JF-5) protein is DNA-directed RNA polymerase subunit beta.